The chain runs to 838 residues: DNA gyrase subunit A (838 aa).

Residues 41-510 (LPEVRDGLKP…ADGDVSDEDL (470 aa)) enclose the Topo IIA-type catalytic domain. Tyrosine 129 acts as the O-(5'-phospho-DNA)-tyrosine intermediate in catalysis. The GyrA-box signature appears at 537–543 (QKRGGKG).

This sequence belongs to the type II topoisomerase GyrA/ParC subunit family. In terms of assembly, heterotetramer, composed of two GyrA and two GyrB chains. In the heterotetramer, GyrA contains the active site tyrosine that forms a transient covalent intermediate with DNA, while GyrB binds cofactors and catalyzes ATP hydrolysis. The cofactor is Mg(2+).

Its subcellular location is the cytoplasm. It catalyses the reaction ATP-dependent breakage, passage and rejoining of double-stranded DNA.. Its activity is regulated as follows. DNA supercoiling is inhibited by EDTA, novobiocin, coumermycin and ciprofloxacin. A type II topoisomerase that negatively supercoils closed circular double-stranded (ds) DNA in an ATP-dependent manner to modulate DNA topology and maintain chromosomes in an underwound state. Also catalyzes the interconversion of other topological isomers of double-stranded DNA rings, including catenanes and knotted rings. Relaxes negatively supercoiled DNA in an ATP-independent manner. A linear reaction intermediate can be trapped in the presence of the antibiotic ciprofloxacin. Negative supercoiling favors strand separation, and DNA replication, transcription, recombination and repair, all of which involve strand separation. Type II topoisomerases break and join 2 DNA strands simultaneously in an ATP-dependent manner. This chain is DNA gyrase subunit A, found in Mycobacterium bovis (strain BCG / Pasteur 1173P2).